We begin with the raw amino-acid sequence, 700 residues long: Elongation factor G (700 aa).

Residues 8–290 (ERYRNIGISA…GVIDFMPSPI (283 aa)) form the tr-type G domain. GTP is bound by residues 17 to 24 (AHIDAGKT), 88 to 92 (DTPGH), and 142 to 145 (NKMD).

This sequence belongs to the TRAFAC class translation factor GTPase superfamily. Classic translation factor GTPase family. EF-G/EF-2 subfamily.

It localises to the cytoplasm. Catalyzes the GTP-dependent ribosomal translocation step during translation elongation. During this step, the ribosome changes from the pre-translocational (PRE) to the post-translocational (POST) state as the newly formed A-site-bound peptidyl-tRNA and P-site-bound deacylated tRNA move to the P and E sites, respectively. Catalyzes the coordinated movement of the two tRNA molecules, the mRNA and conformational changes in the ribosome. The polypeptide is Elongation factor G (Methylibium petroleiphilum (strain ATCC BAA-1232 / LMG 22953 / PM1)).